A 165-amino-acid chain; its full sequence is Xanthine-guanine phosphoribosyltransferase (165 aa).

5-phospho-alpha-D-ribose 1-diphosphate contacts are provided by residues 41–42 (RG) and 98–106 (DDLTDTGKT). Residue Asp-99 coordinates Mg(2+). 2 residues coordinate guanine: Asp-102 and Ile-145. Xanthine-binding residues include Asp-102 and Ile-145. GMP-binding positions include 102–106 (DTGKT) and 144–145 (WI).

Belongs to the purine/pyrimidine phosphoribosyltransferase family. XGPT subfamily. In terms of assembly, homotetramer. It depends on Mg(2+) as a cofactor.

The protein resides in the cell inner membrane. The catalysed reaction is GMP + diphosphate = guanine + 5-phospho-alpha-D-ribose 1-diphosphate. It catalyses the reaction XMP + diphosphate = xanthine + 5-phospho-alpha-D-ribose 1-diphosphate. The enzyme catalyses IMP + diphosphate = hypoxanthine + 5-phospho-alpha-D-ribose 1-diphosphate. It functions in the pathway purine metabolism; GMP biosynthesis via salvage pathway; GMP from guanine: step 1/1. The protein operates within purine metabolism; XMP biosynthesis via salvage pathway; XMP from xanthine: step 1/1. In terms of biological role, purine salvage pathway enzyme that catalyzes the transfer of the ribosyl-5-phosphate group from 5-phospho-alpha-D-ribose 1-diphosphate (PRPP) to the N9 position of the 6-oxopurines guanine and xanthine to form the corresponding ribonucleotides GMP (guanosine 5'-monophosphate) and XMP (xanthosine 5'-monophosphate), with the release of PPi. To a lesser extent, also acts on hypoxanthine. In Brucella anthropi (strain ATCC 49188 / DSM 6882 / CCUG 24695 / JCM 21032 / LMG 3331 / NBRC 15819 / NCTC 12168 / Alc 37) (Ochrobactrum anthropi), this protein is Xanthine-guanine phosphoribosyltransferase.